Reading from the N-terminus, the 384-residue chain is F-box protein At2g07140 (384 aa).

Positions 1 to 46 (MTLPELPKDLVEEILSFVPATSLKRLRSTCKGWNRLFKDDKRFTRI) constitute an F-box domain.

The chain is F-box protein At2g07140 from Arabidopsis thaliana (Mouse-ear cress).